A 154-amino-acid polypeptide reads, in one-letter code: Aspartate carbamoyltransferase regulatory chain (154 aa).

Zn(2+) is bound by residues C109, C114, C138, and C141.

Belongs to the PyrI family. As to quaternary structure, contains catalytic and regulatory chains. It depends on Zn(2+) as a cofactor.

Its function is as follows. Involved in allosteric regulation of aspartate carbamoyltransferase. In Aliivibrio salmonicida (strain LFI1238) (Vibrio salmonicida (strain LFI1238)), this protein is Aspartate carbamoyltransferase regulatory chain.